The primary structure comprises 263 residues: MMCEDASDGKKIDETRKYRNNRSSKCRAIIINNVVFCGMEKRIGSDKDKKKLSKLFERLGYQSTSYDNLKSSEILETVRQFTQSNHGDSLIITIMSHGDQGLLYGVDGVPVQMLDIIDLMCTASLAKKPKWLMCVCCRGDRIDRAVRCDGFIDNFFDRFPKFFQFMKSKFPSHQTSSSQADLLVSFSTSPGFLSFRDETKGTWYIQELYRVIIENAKDTHLADLLMETNRRVVEKYEADKVVIVCKQAPEFWSRFTKQLFFDV.

The propeptide at 1 to 8 (MMCEDASD) is removed in mature form by cps-1 or ced-3.

The protein belongs to the peptidase C14A family. As to quaternary structure, interacts with ced-3 (via large subunit p17 or small subunit p13); the interaction inhibits ced-3 autoactivation. Post-translationally, cleavage by csp-1 isoform b or ced-3 removes the propeptide and generates subunit p31 in vitro. An additional cleavage at Asp-149 generates the 2 subunits p17 and p14 but this cleavage appears to be less efficient. In terms of tissue distribution, specifically expressed in the hermaphrodite germline.

The protein localises to the cytoplasm. In terms of biological role, putative inactive caspase. In the germline, binds caspase ced-3 zymogen and prevents ced-3 autoactivation. Does not affect the caspase activity of mature ced-3 and ced-4-mediated mature ced-3 activation. Negatively regulates germline apoptosis by inhibiting autocleavage of caspase ced-3. Involved in fertility. Putative inactive caspase. Dispensable for the inhibition of germline apoptosis. This chain is Putative inactive caspase B, found in Caenorhabditis elegans.